We begin with the raw amino-acid sequence, 422 residues long: Aminopentol aminotransferase (422 aa).

N6-(pyridoxal phosphate)lysine is present on K258.

Belongs to the class-III pyridoxal-phosphate-dependent aminotransferase family. Pyridoxal 5'-phosphate is required as a cofactor.

Its subcellular location is the cytoplasm. The enzyme catalyses (2S,3S,5R,10R,12S,14S,15R,16R)-2-amino-12,16-dimethylicosane-3,5,10,14,15-pentol + pyruvate = (3S,5R,10R,12S,14S,15R,16R)-3,5,10,14,15-pentahydroxy-12,16-dimethylicosan-2-one + L-alanine. Its function is as follows. Involved in degradation of fumonisin B1. Catalyzes the deamination of aminopentol (HFB1) to 2-keto-HFB1. Pyruvate is the preferred cosubstrate, but it can also use several other alpha-keto acids as amino group acceptors. The chain is Aminopentol aminotransferase (fumI) from Sphingopyxis macrogoltabida (Sphingomonas macrogoltabidus).